A 511-amino-acid polypeptide reads, in one-letter code: Bifunctional purine biosynthesis protein PurH (511 aa).

One can recognise an MGS-like domain in the interval 1 to 147 (MIQIKRALIS…KNYKHTLVLT (147 aa)).

It belongs to the PurH family.

The catalysed reaction is (6R)-10-formyltetrahydrofolate + 5-amino-1-(5-phospho-beta-D-ribosyl)imidazole-4-carboxamide = 5-formamido-1-(5-phospho-D-ribosyl)imidazole-4-carboxamide + (6S)-5,6,7,8-tetrahydrofolate. The enzyme catalyses IMP + H2O = 5-formamido-1-(5-phospho-D-ribosyl)imidazole-4-carboxamide. Its pathway is purine metabolism; IMP biosynthesis via de novo pathway; 5-formamido-1-(5-phospho-D-ribosyl)imidazole-4-carboxamide from 5-amino-1-(5-phospho-D-ribosyl)imidazole-4-carboxamide (10-formyl THF route): step 1/1. The protein operates within purine metabolism; IMP biosynthesis via de novo pathway; IMP from 5-formamido-1-(5-phospho-D-ribosyl)imidazole-4-carboxamide: step 1/1. This is Bifunctional purine biosynthesis protein PurH from Leptospira borgpetersenii serovar Hardjo-bovis (strain JB197).